The sequence spans 32 residues: uncharacterized protein (32 aa).

This is an uncharacterized protein from Schizosaccharomyces pombe (strain 972 / ATCC 24843) (Fission yeast).